Reading from the N-terminus, the 25-residue chain is Caerin-1.10 (25 aa).

Leucine 25 carries the leucine amide modification.

Belongs to the frog skin active peptide (FSAP) family. Caerin subfamily. Expressed by the skin dorsal glands.

The protein resides in the secreted. Antibacterial peptide with wide spectrum of activity. The protein is Caerin-1.10 of Litoria rothii (Roth's tree frog).